Here is a 230-residue protein sequence, read N- to C-terminus: Cytidylate kinase (230 aa).

ATP is bound at residue 12 to 20 (GPSGAGKGT).

This sequence belongs to the cytidylate kinase family. Type 1 subfamily.

The protein localises to the cytoplasm. The catalysed reaction is CMP + ATP = CDP + ADP. The enzyme catalyses dCMP + ATP = dCDP + ADP. This chain is Cytidylate kinase, found in Shewanella sp. (strain MR-7).